A 429-amino-acid polypeptide reads, in one-letter code: U3 small nucleolar RNA-associated protein 18 homolog (429 aa).

WD repeat units lie at residues 117–156 (RYTR…KKDR), 295–336 (TDDG…NSTN), 345–386 (NLVT…TFKN), and 392–428 (GKVT…HFTD).

Belongs to the WD repeat UTP18 family.

The protein resides in the nucleus. It is found in the nucleolus. Its function is as follows. Involved in nucleolar processing of pre-18S ribosomal RNA. The polypeptide is U3 small nucleolar RNA-associated protein 18 homolog (Caenorhabditis elegans).